A 1012-amino-acid polypeptide reads, in one-letter code: Tolloid-like protein 2 (1012 aa).

Residues 1 to 21 form the signal peptide; that stretch reads MPLATTLGTLVLLLLLPLPRG. A propeptide spanning residues 22 to 146 is cleaved from the precursor; it reads AEVTGDHSNV…AKTFSARVRR (125 aa). The segment at 83–135 is disordered; the sequence is KPSIDKPGHDTGGLEETSARWPNDTASNASIQAPRKDGKDATTFLPNPGTSNT. Over residues 126-135 the composition is skewed to polar residues; sequence FLPNPGTSNT. A Peptidase M12A domain is found at 146–346; the sequence is RATTSRTERI…AQARKLYKCP (201 aa). N-linked (GlcNAc...) asparagine glycosylation is present at asparagine 168. 4 disulfides stabilise this stretch: cysteine 189–cysteine 345, cysteine 209–cysteine 231, cysteine 211–cysteine 212, and cysteine 348–cysteine 374. Position 239 (histidine 239) interacts with Zn(2+). The active site involves glutamate 240. Zn(2+)-binding residues include histidine 243 and histidine 249. CUB domains follow at residues 348-460 and 461-573; these read CGET…YEAM and CGGD…FFKE. N-linked (GlcNAc...) asparagine glycosylation is found at asparagine 358 and asparagine 389. Disulfide bonds link cysteine 401–cysteine 423, cysteine 461–cysteine 487, cysteine 514–cysteine 536, cysteine 577–cysteine 589, cysteine 585–cysteine 598, cysteine 600–cysteine 613, cysteine 617–cysteine 643, cysteine 670–cysteine 692, cysteine 733–cysteine 744, cysteine 740–cysteine 753, cysteine 755–cysteine 768, and cysteine 773–cysteine 799. Residues 573 to 614 enclose the EGF-like 1; calcium-binding domain; it reads EVDECSWPDHGGCEQRCVNTLGSYTCACDPGYELAADKKTCE. A CUB 3 domain is found at 617 to 729; it reads CGGFITKLNG…RGFRAHFFSD (113 aa). A glycan (N-linked (GlcNAc...) asparagine) is linked at asparagine 625. The region spanning 729–769 is the EGF-like 2; calcium-binding domain; that stretch reads DKDECAKDNGGCQQECVNTFGSYLCRCRNGYRLHENGHDCK. CUB domains follow at residues 773 to 885 and 886 to 1002; these read CAYK…HSTE and CGGR…YTST. N-linked (GlcNAc...) asparagine glycosylation occurs at asparagine 802. 3 cysteine pairs are disulfide-bonded: cysteine 826–cysteine 848, cysteine 886–cysteine 916, and cysteine 943–cysteine 965. Arginine 960 and arginine 963 each carry omega-N-methylarginine.

Zn(2+) is required as a cofactor.

Its subcellular location is the secreted. In terms of biological role, protease which specifically processes pro-lysyl oxidase. Required for the embryonic development. Predominant protease, which in the development, influences dorsal-ventral patterning and skeletogenesis. The sequence is that of Tolloid-like protein 2 (Tll2) from Mus musculus (Mouse).